Consider the following 169-residue polypeptide: Peptide methionine sulfoxide reductase MsrA (169 aa).

Cys-10 is a catalytic residue.

Belongs to the MsrA Met sulfoxide reductase family.

The enzyme catalyses L-methionyl-[protein] + [thioredoxin]-disulfide + H2O = L-methionyl-(S)-S-oxide-[protein] + [thioredoxin]-dithiol. It catalyses the reaction [thioredoxin]-disulfide + L-methionine + H2O = L-methionine (S)-S-oxide + [thioredoxin]-dithiol. Its function is as follows. Has an important function as a repair enzyme for proteins that have been inactivated by oxidation. Catalyzes the reversible oxidation-reduction of methionine sulfoxide in proteins to methionine. This Streptococcus agalactiae serotype III (strain NEM316) protein is Peptide methionine sulfoxide reductase MsrA.